Reading from the N-terminus, the 106-residue chain is Large ribosomal subunit protein uL24 (106 aa).

Belongs to the universal ribosomal protein uL24 family. In terms of assembly, part of the 50S ribosomal subunit.

Its function is as follows. One of two assembly initiator proteins, it binds directly to the 5'-end of the 23S rRNA, where it nucleates assembly of the 50S subunit. In terms of biological role, one of the proteins that surrounds the polypeptide exit tunnel on the outside of the subunit. The sequence is that of Large ribosomal subunit protein uL24 from Bordetella petrii (strain ATCC BAA-461 / DSM 12804 / CCUG 43448).